The following is a 256-amino-acid chain: tRNA (guanine-N(7)-)-methyltransferase (256 aa).

S-adenosyl-L-methionine-binding residues include Glu-85, Glu-110, Asp-137, and Asp-159. Residue Asp-159 is part of the active site. Substrate is bound by residues Lys-163 and Asp-195.

Belongs to the class I-like SAM-binding methyltransferase superfamily. TrmB family.

The enzyme catalyses guanosine(46) in tRNA + S-adenosyl-L-methionine = N(7)-methylguanosine(46) in tRNA + S-adenosyl-L-homocysteine. The protein operates within tRNA modification; N(7)-methylguanine-tRNA biosynthesis. Catalyzes the formation of N(7)-methylguanine at position 46 (m7G46) in tRNA. The sequence is that of tRNA (guanine-N(7)-)-methyltransferase from Rhodopseudomonas palustris (strain BisB5).